The following is a 273-amino-acid chain: 3-methyl-2-oxobutanoate hydroxymethyltransferase (273 aa).

Residues Asp53 and Asp92 each contribute to the Mg(2+) site. 3-methyl-2-oxobutanoate is bound by residues 53–54 (DS), Asp92, and Lys120. Mg(2+) is bound at residue Glu122. Glu189 (proton acceptor) is an active-site residue.

This sequence belongs to the PanB family. Homodecamer; pentamer of dimers. Requires Mg(2+) as cofactor.

It localises to the cytoplasm. It carries out the reaction 3-methyl-2-oxobutanoate + (6R)-5,10-methylene-5,6,7,8-tetrahydrofolate + H2O = 2-dehydropantoate + (6S)-5,6,7,8-tetrahydrofolate. It functions in the pathway cofactor biosynthesis; (R)-pantothenate biosynthesis; (R)-pantoate from 3-methyl-2-oxobutanoate: step 1/2. Catalyzes the reversible reaction in which hydroxymethyl group from 5,10-methylenetetrahydrofolate is transferred onto alpha-ketoisovalerate to form ketopantoate. In Cupriavidus necator (strain ATCC 17699 / DSM 428 / KCTC 22496 / NCIMB 10442 / H16 / Stanier 337) (Ralstonia eutropha), this protein is 3-methyl-2-oxobutanoate hydroxymethyltransferase.